Consider the following 806-residue polypeptide: DNA topoisomerase 4 subunit A (806 aa).

Residues Leu-33 to Met-499 form the Topo IIA-type catalytic domain. The active-site O-(5'-phospho-DNA)-tyrosine intermediate is the Tyr-121.

It belongs to the type II topoisomerase GyrA/ParC subunit family. ParC type 2 subfamily. In terms of assembly, heterotetramer composed of ParC and ParE.

It is found in the cell membrane. The protein localises to the cytoplasm. It carries out the reaction ATP-dependent breakage, passage and rejoining of double-stranded DNA.. Topoisomerase IV is essential for chromosome segregation. It relaxes supercoiled DNA. Performs the decatenation events required during the replication of a circular DNA molecule. This is DNA topoisomerase 4 subunit A from Bacillus subtilis (strain 168).